We begin with the raw amino-acid sequence, 106 residues long: PAT complex subunit Asterix (106 aa).

Positions 1-29 are disordered; the sequence is MSANNMSDPRRPNKVLRYKPPPSECNPAL. Serine 2 carries the N-acetylserine modification. Over 2–32 the chain is Cytoplasmic; it reads SANNMSDPRRPNKVLRYKPPPSECNPALDDP. Residues 33–51 form a helical membrane-spanning segment; it reads TPDYMNLLGMIFSMCGLML. A topological domain (lumenal) is located at residue lysine 52. A helical membrane pass occupies residues 53–70; it reads LKWCAWVAVYCSFISFAN. The Cytoplasmic portion of the chain corresponds to 71–74; it reads SRSS. The chain crosses the membrane as a helical span at residues 75-95; the sequence is EDTKQMMSSFMLSISAVVMSY. The Lumenal portion of the chain corresponds to 96-106; it reads LQNPQPMTPPW.

Belongs to the Asterix family. Component of the PAT complex, composed of WDR83OS/Asterix and CCDC47. The PAT complex is part of the multi-pass translocon (MPT) complex, composed of three subcomplexes, the GEL complex (composed of RAB5IF/OPTI and TMCO1), the BOS complex (composed of NCLN/Nicalin, NOMO1 and TMEM147) and the PAT complex (composed of WDR83OS/Asterix and CCDC47). The MPT complex associates with the SEC61 complex.

The protein resides in the endoplasmic reticulum membrane. In terms of biological role, component of the multi-pass translocon (MPT) complex that mediates insertion of multi-pass membrane proteins into the lipid bilayer of membranes. The MPT complex takes over after the SEC61 complex: following membrane insertion of the first few transmembrane segments of proteins by the SEC61 complex, the MPT complex occludes the lateral gate of the SEC61 complex to promote insertion of subsequent transmembrane regions. Within the MPT complex, the PAT subcomplex sequesters any highly polar regions in the transmembrane domains away from the non-polar membrane environment until they can be buried in the interior of the fully assembled protein. Within the PAT subcomplex, WDR83OS/Asterix binds to and redirects the substrate to a location behind the SEC61 complex. In Bos taurus (Bovine), this protein is PAT complex subunit Asterix (WDR83OS).